We begin with the raw amino-acid sequence, 177 residues long: ATP-dependent protease subunit HslV (177 aa).

Residue threonine 7 is part of the active site. Na(+)-binding residues include alanine 162, cysteine 165, and threonine 168.

The protein belongs to the peptidase T1B family. HslV subfamily. As to quaternary structure, a double ring-shaped homohexamer of HslV is capped on each side by a ring-shaped HslU homohexamer. The assembly of the HslU/HslV complex is dependent on binding of ATP.

The protein localises to the cytoplasm. It catalyses the reaction ATP-dependent cleavage of peptide bonds with broad specificity.. Its activity is regulated as follows. Allosterically activated by HslU binding. Its function is as follows. Protease subunit of a proteasome-like degradation complex believed to be a general protein degrading machinery. The sequence is that of ATP-dependent protease subunit HslV from Thioalkalivibrio sulfidiphilus (strain HL-EbGR7).